Consider the following 160-residue polypeptide: MQCPSCQNTDSRVLESRAADGGRSVRRRRECLNCEFRFTTYERVETVPITVIKRNGNREIFSRSKLLHGLNRACEKTGLDTSRLESLVEELELRLQQRTGKEVSSTEIGEFVLRDLKQISEVAYIRFASVYRQFRGIDDFVSTLETLNADQEQNHLATVR.

The segment at 3–34 is a zinc-finger region; the sequence is CPSCQNTDSRVLESRAADGGRSVRRRRECLNC. Residues 49 to 139 enclose the ATP-cone domain; that stretch reads ITVIKRNGNR…VYRQFRGIDD (91 aa).

Belongs to the NrdR family. It depends on Zn(2+) as a cofactor.

Its function is as follows. Negatively regulates transcription of bacterial ribonucleotide reductase nrd genes and operons by binding to NrdR-boxes. In Synechococcus sp. (strain CC9605), this protein is Transcriptional repressor NrdR.